We begin with the raw amino-acid sequence, 96 residues long: Protein Vpr (96 aa).

The homooligomerization stretch occupies residues 1-42 (MEQAPEDQGPQREPYNEWTLELLEELKNEAVRHFPRPWLHGL). S79 carries the post-translational modification Phosphoserine; by host.

Belongs to the HIV-1 VPR protein family. As to quaternary structure, homooligomer, may form homodimer. Interacts with p6-gag region of the Pr55 Gag precursor protein through a (Leu-X-X)4 motif near the C-terminus of the P6gag protein. Interacts with host UNG. May interact with host RAD23A/HHR23A. Interacts with host VPRBP/DCAF1, leading to hijack the CUL4A-RBX1-DDB1-DCAF1/VPRBP complex, mediating ubiquitination of host proteins such as TERT and ZGPAT and arrest of the cell cycle in G2 phase. Phosphorylated on several residues by host. These phosphorylations regulate VPR activity for the nuclear import of the HIV-1 pre-integration complex.

The protein localises to the virion. It is found in the host nucleus. The protein resides in the host extracellular space. Its function is as follows. During virus replication, may deplete host UNG protein, and incude G2-M cell cycle arrest. Acts by targeting specific host proteins for degradation by the 26S proteasome, through association with the cellular CUL4A-DDB1 E3 ligase complex by direct interaction with host VPRPB/DCAF-1. Cell cycle arrest reportedly occurs within hours of infection and is not blocked by antiviral agents, suggesting that it is initiated by the VPR carried into the virion. Additionally, VPR induces apoptosis in a cell cycle dependent manner suggesting that these two effects are mechanistically linked. Detected in the serum and cerebrospinal fluid of AIDS patient, VPR may also induce cell death to bystander cells. In terms of biological role, during virus entry, plays a role in the transport of the viral pre-integration (PIC) complex to the host nucleus. This function is crucial for viral infection of non-dividing macrophages. May act directly at the nuclear pore complex, by binding nucleoporins phenylalanine-glycine (FG)-repeat regions. In Human immunodeficiency virus type 1 group M subtype G (isolate 92NG083) (HIV-1), this protein is Protein Vpr.